Consider the following 298-residue polypeptide: NAD kinase (298 aa).

The Proton acceptor role is filled by Asp80. NAD(+)-binding positions include Asp80 to Gly81, Asn154 to Asp155, Arg182, Asp184, Thr195 to Ser200, Ala219, and Gln253.

It belongs to the NAD kinase family. The cofactor is a divalent metal cation.

The protein resides in the cytoplasm. It catalyses the reaction NAD(+) + ATP = ADP + NADP(+) + H(+). Its function is as follows. Involved in the regulation of the intracellular balance of NAD and NADP, and is a key enzyme in the biosynthesis of NADP. Catalyzes specifically the phosphorylation on 2'-hydroxyl of the adenosine moiety of NAD to yield NADP. This chain is NAD kinase, found in Acidovorax ebreus (strain TPSY) (Diaphorobacter sp. (strain TPSY)).